We begin with the raw amino-acid sequence, 524 residues long: Bifunctional purine biosynthesis protein PurH (524 aa).

One can recognise an MGS-like domain in the interval 1–144 (MTRRALVSVS…KNSAHVGVVV (144 aa)).

Belongs to the PurH family.

It catalyses the reaction (6R)-10-formyltetrahydrofolate + 5-amino-1-(5-phospho-beta-D-ribosyl)imidazole-4-carboxamide = 5-formamido-1-(5-phospho-D-ribosyl)imidazole-4-carboxamide + (6S)-5,6,7,8-tetrahydrofolate. The catalysed reaction is IMP + H2O = 5-formamido-1-(5-phospho-D-ribosyl)imidazole-4-carboxamide. It participates in purine metabolism; IMP biosynthesis via de novo pathway; 5-formamido-1-(5-phospho-D-ribosyl)imidazole-4-carboxamide from 5-amino-1-(5-phospho-D-ribosyl)imidazole-4-carboxamide (10-formyl THF route): step 1/1. Its pathway is purine metabolism; IMP biosynthesis via de novo pathway; IMP from 5-formamido-1-(5-phospho-D-ribosyl)imidazole-4-carboxamide: step 1/1. This chain is Bifunctional purine biosynthesis protein PurH, found in Anaeromyxobacter dehalogenans (strain 2CP-1 / ATCC BAA-258).